Reading from the N-terminus, the 104-residue chain is L-rhamnose mutarotase (104 aa).

Tyrosine 18 contacts substrate. Histidine 22 functions as the Proton donor in the catalytic mechanism. Substrate is bound by residues tyrosine 41 and tryptophan 76–tryptophan 77.

Belongs to the rhamnose mutarotase family. Homodimer.

It is found in the cytoplasm. It catalyses the reaction alpha-L-rhamnose = beta-L-rhamnose. Its pathway is carbohydrate metabolism; L-rhamnose metabolism. In terms of biological role, involved in the anomeric conversion of L-rhamnose. The sequence is that of L-rhamnose mutarotase from Escherichia coli O127:H6 (strain E2348/69 / EPEC).